Consider the following 35-residue polypeptide: Photosystem II reaction center protein M (35 aa).

The chain crosses the membrane as a helical span at residues 7–27; the sequence is GFIATILFVLVPTVFLLILYI.

It belongs to the PsbM family. In terms of assembly, PSII is composed of 1 copy each of membrane proteins PsbA, PsbB, PsbC, PsbD, PsbE, PsbF, PsbH, PsbI, PsbJ, PsbK, PsbL, PsbM, PsbT, PsbX, PsbY, PsbZ, Psb30/Ycf12, peripheral proteins PsbO, CyanoQ (PsbQ), PsbU, PsbV and a large number of cofactors. It forms dimeric complexes.

The protein resides in the cellular thylakoid membrane. One of the components of the core complex of photosystem II (PSII). PSII is a light-driven water:plastoquinone oxidoreductase that uses light energy to abstract electrons from H(2)O, generating O(2) and a proton gradient subsequently used for ATP formation. It consists of a core antenna complex that captures photons, and an electron transfer chain that converts photonic excitation into a charge separation. This subunit is found at the monomer-monomer interface. This chain is Photosystem II reaction center protein M, found in Gloeothece citriformis (strain PCC 7424) (Cyanothece sp. (strain PCC 7424)).